Reading from the N-terminus, the 185-residue chain is HTH-type transcriptional regulator Hpr (185 aa).

In terms of domain architecture, HTH marR-type spans 13–157 (AMIFSQRIAQ…LIAILRNIYG (145 aa)). Residues 63-86 (ISEIAKFGVMHVSTAFNFSKKLEE) constitute a DNA-binding region (H-T-H motif).

Homodimer.

Its function is as follows. Negative regulator of protease production and sporulation. The polypeptide is HTH-type transcriptional regulator Hpr (Bacillus cereus (strain G9842)).